Reading from the N-terminus, the 295-residue chain is 33 kDa chaperonin (295 aa).

Cystine bridges form between C237–C239 and C270–C273.

It belongs to the HSP33 family. In terms of processing, under oxidizing conditions two disulfide bonds are formed involving the reactive cysteines. Under reducing conditions zinc is bound to the reactive cysteines and the protein is inactive.

The protein localises to the cytoplasm. Its function is as follows. Redox regulated molecular chaperone. Protects both thermally unfolding and oxidatively damaged proteins from irreversible aggregation. Plays an important role in the bacterial defense system toward oxidative stress. This Symbiobacterium thermophilum (strain DSM 24528 / JCM 14929 / IAM 14863 / T) protein is 33 kDa chaperonin.